A 255-amino-acid polypeptide reads, in one-letter code: Probable UDP-N-acetylglucosamine pyrophosphorylase (255 aa).

It carries out the reaction N-acetyl-alpha-D-glucosamine 1-phosphate + UTP + H(+) = UDP-N-acetyl-alpha-D-glucosamine + diphosphate. It participates in nucleotide-sugar biosynthesis; UDP-N-acetyl-alpha-D-glucosamine biosynthesis; UDP-N-acetyl-alpha-D-glucosamine from N-acetyl-alpha-D-glucosamine 1-phosphate: step 1/1. The protein is Probable UDP-N-acetylglucosamine pyrophosphorylase of Acanthamoeba polyphaga (Amoeba).